The following is a 639-amino-acid chain: Elongation factor 4 (639 aa).

The 182-residue stretch at 39 to 220 (AQIRNFCIIA…EVVRLVPPPT (182 aa)) folds into the tr-type G domain. Residues 51-56 (DHGKST) and 167-170 (NKID) each bind GTP.

Belongs to the TRAFAC class translation factor GTPase superfamily. Classic translation factor GTPase family. LepA subfamily.

It localises to the cell membrane. The enzyme catalyses GTP + H2O = GDP + phosphate + H(+). In terms of biological role, required for accurate and efficient protein synthesis under certain stress conditions. May act as a fidelity factor of the translation reaction, by catalyzing a one-codon backward translocation of tRNAs on improperly translocated ribosomes. Back-translocation proceeds from a post-translocation (POST) complex to a pre-translocation (PRE) complex, thus giving elongation factor G a second chance to translocate the tRNAs correctly. Binds to ribosomes in a GTP-dependent manner. The sequence is that of Elongation factor 4 from Mycobacterium sp. (strain JLS).